The following is a 360-amino-acid chain: MRVDLFDFDLPENSIALRPASPRDSARMLVVRPDGAPVLEDRGVLDLPSFLRPGDALVFNDTKVIPAQLEGVRYRGEDISTPVSLTLHMRVAPSRWKAFARPARRLKPGDRISFGHGGSACLLGSLEAVVEEKGDAGEVTLRFDLSGPSLDEAIMAVGHIPLPPYIASKRADDERDRTDYQTVYAREEGAVAAPTAGLHFTDRLFAKLDEGGIERYFVTLHVGAGTFLPVKADDTADHVMHEEIGHVDPVTAAKLNAVRERGGRIVCVGTTSLRLIESAAAEDGNIRPWSGATGIFITPGYRFRAVDMLMTNFHLPKSTLFMLVSAFAGLETMHAAYAHAIATGYRFYSYGDSSLLFRKD.

Belongs to the QueA family. As to quaternary structure, monomer.

Its subcellular location is the cytoplasm. The catalysed reaction is 7-aminomethyl-7-carbaguanosine(34) in tRNA + S-adenosyl-L-methionine = epoxyqueuosine(34) in tRNA + adenine + L-methionine + 2 H(+). It participates in tRNA modification; tRNA-queuosine biosynthesis. Functionally, transfers and isomerizes the ribose moiety from AdoMet to the 7-aminomethyl group of 7-deazaguanine (preQ1-tRNA) to give epoxyqueuosine (oQ-tRNA). In Rhizobium meliloti (strain 1021) (Ensifer meliloti), this protein is S-adenosylmethionine:tRNA ribosyltransferase-isomerase.